The primary structure comprises 172 residues: Signal peptidase complex catalytic subunit SEC11 (172 aa).

At 1 to 14 the chain is on the cytoplasmic side; the sequence is MLSGLQNPRQAAAQ. A helical; Signal-anchor for type II membrane protein transmembrane segment spans residues 15-35; that stretch reads LMNFALILSTAFMMWKGLSVA. Residues 36 to 172 are Lumenal-facing; sequence TDSPSPIVVV…MGLLVVIQRE (137 aa). Catalysis depends on charge relay system residues serine 49, histidine 90, and aspartate 115. The segment at 158–169 is C-terminal short (CTS) helix; that stretch reads VMLGIMGLLVVI.

This sequence belongs to the peptidase S26B family. Component of the signal peptidase complex (SPC) composed of a catalytic subunit SEC11 and three accessory subunits SPC1, SPC2 and SPC3. The complex induces a local thinning of the ER membrane which is used to measure the length of the signal peptide (SP) h-region of protein substrates. This ensures the selectivity of the complex towards h-regions shorter than 18-20 amino acids. SPC associates with the translocon complex.

The protein localises to the endoplasmic reticulum membrane. It catalyses the reaction Cleavage of hydrophobic, N-terminal signal or leader sequences from secreted and periplasmic proteins.. In terms of biological role, catalytic component of the signal peptidase complex (SPC) which catalyzes the cleavage of N-terminal signal sequences from nascent proteins as they are translocated into the lumen of the endoplasmic reticulum. Specifically cleaves N-terminal signal peptides that contain a hydrophobic alpha-helix (h-region) shorter than 18-20 amino acids. The chain is Signal peptidase complex catalytic subunit SEC11 (SEC11) from Metarhizium acridum (strain CQMa 102).